A 292-amino-acid chain; its full sequence is 4-hydroxybenzoate octaprenyltransferase (292 aa).

The next 8 helical transmembrane spans lie at 20–40 (IGIL…ADGM), 43–63 (PMIL…GCAI), 94–114 (LLIA…LNLL), 135–155 (FFAM…PMAF), 160–180 (GTVP…VIAY), 209–229 (VAGI…AGIL), 234–254 (IWFY…YGMI), and 266–286 (FLHN…DTLF).

The protein belongs to the UbiA prenyltransferase family. Mg(2+) serves as cofactor.

The protein resides in the cell inner membrane. The enzyme catalyses all-trans-octaprenyl diphosphate + 4-hydroxybenzoate = 4-hydroxy-3-(all-trans-octaprenyl)benzoate + diphosphate. It participates in cofactor biosynthesis; ubiquinone biosynthesis. In terms of biological role, catalyzes the prenylation of para-hydroxybenzoate (PHB) with an all-trans polyprenyl group. Mediates the second step in the final reaction sequence of ubiquinone-8 (UQ-8) biosynthesis, which is the condensation of the polyisoprenoid side chain with PHB, generating the first membrane-bound Q intermediate 3-octaprenyl-4-hydroxybenzoate. The sequence is that of 4-hydroxybenzoate octaprenyltransferase from Nitrosomonas europaea (strain ATCC 19718 / CIP 103999 / KCTC 2705 / NBRC 14298).